Reading from the N-terminus, the 358-residue chain is tRNA-specific 2-thiouridylase MnmA (358 aa).

ATP contacts are provided by residues 6 to 13 (ALSGGVDS) and Met32. Cys103 functions as the Nucleophile in the catalytic mechanism. An intrachain disulfide couples Cys103 to Cys201. Gly127 is a binding site for ATP. Residues 151-153 (KDQ) form an interaction with tRNA region. Cys201 (cysteine persulfide intermediate) is an active-site residue.

This sequence belongs to the MnmA/TRMU family.

The protein resides in the cytoplasm. The enzyme catalyses S-sulfanyl-L-cysteinyl-[protein] + uridine(34) in tRNA + AH2 + ATP = 2-thiouridine(34) in tRNA + L-cysteinyl-[protein] + A + AMP + diphosphate + H(+). In terms of biological role, catalyzes the 2-thiolation of uridine at the wobble position (U34) of tRNA, leading to the formation of s(2)U34. In Thermotoga sp. (strain RQ2), this protein is tRNA-specific 2-thiouridylase MnmA.